The primary structure comprises 825 residues: BEN domain-containing protein 3 (825 aa).

Residues 1–11 show a composition bias toward acidic residues; the sequence is MNSTEISEDVE. Residues 1 to 35 are disordered; sequence MNSTEISEDVEEVLKNNPVKAEGSDATLDCSRNSR. Residue K20 forms a Glycyl lysine isopeptide (Lys-Gly) (interchain with G-Cter in SUMO); alternate linkage. K20 is covalently cross-linked (Glycyl lysine isopeptide (Lys-Gly) (interchain with G-Cter in SUMO1); alternate). A Glycyl lysine isopeptide (Lys-Gly) (interchain with G-Cter in SUMO2); alternate cross-link involves residue K20. Glycyl lysine isopeptide (Lys-Gly) (interchain with G-Cter in SUMO2) cross-links involve residues K39, K54, K56, K71, K126, K127, K135, K140, K156, and K174. Positions 52–122 are disordered; the sequence is SSKRKQLDSD…EEEPSTEATV (71 aa). Residues 54–56 carry the Nuclear localization signal motif; it reads KRK. Positions 239–340 constitute a BEN 1 domain; the sequence is PPPEYQLTAS…DFFSRFWAQR (102 aa). S376 is subject to Phosphoserine. Positions 384 to 484 constitute a BEN 2 domain; it reads ASDHVVDTQD…DELEGLGLEG (101 aa). Residue K424 forms a Glycyl lysine isopeptide (Lys-Gly) (interchain with G-Cter in SUMO2) linkage. S486 carries the post-translational modification Phosphoserine. Residue K509 forms a Glycyl lysine isopeptide (Lys-Gly) (interchain with G-Cter in SUMO); alternate linkage. K509 participates in a covalent cross-link: Glycyl lysine isopeptide (Lys-Gly) (interchain with G-Cter in SUMO2); alternate. K525 is covalently cross-linked (Glycyl lysine isopeptide (Lys-Gly) (interchain with G-Cter in SUMO2)). Positions 547–647 constitute a BEN 3 domain; that stretch reads GSDCLLSKEQ…ERCRRRDTEQ (101 aa). K697 participates in a covalent cross-link: Glycyl lysine isopeptide (Lys-Gly) (interchain with G-Cter in SUMO2). In terms of domain architecture, BEN 4 spans 712-813; that stretch reads VPSPYLLSDK…ERCRRPNRKK (102 aa).

Homooligomer, probably a homooctamer. Interacts with HDAC2 and HDAC3, but not HDAC1. Interacts with SALL4. Interacts with SMARCA5/SNF2H, BAZ2A/TIP5 and USP21. Interacts with the nucleosome remodeling and histone deacetylase (NuRD) repressor complex. Interacts (via BEN domains 1 and 3) with ERCC6L (via N-terminal TPR repeat); the interaction is direct. Sumoylated at Lys-20 by SUMO1 and at Lys-509 by SUMO1, SUMO2 and SUMO3. Sumoylation probably occurs sequentially, with that of Lys-20 preceding that of Lys-509. It does not alter association with heterochromatin, but is required for the repression of transcription.

It is found in the nucleus. The protein resides in the nucleolus. In terms of biological role, transcriptional repressor which associates with the NoRC (nucleolar remodeling complex) complex and plays a key role in repressing rDNA transcription. The sumoylated form modulates the stability of the NoRC complex component BAZ2A/TIP5 by controlling its USP21-mediated deubiquitination. Binds to unmethylated major satellite DNA and is involved in the recruitment of the Polycomb repressive complex 2 (PRC2) to major satellites. Stimulates the ERCC6L translocase and ATPase activities. The protein is BEN domain-containing protein 3 (Bend3) of Mus musculus (Mouse).